Here is a 789-residue protein sequence, read N- to C-terminus: SH3 domain-containing protein 19 (789 aa).

3 disordered regions span residues 24–170 (TNTE…PPRL), 209–404 (DDDV…RPKP), and 472–497 (TPLDERPRGRPNDSGHSQKPVDSGAP). Ser-65 bears the Phosphoserine mark. The segment covering 296–305 (SHSDRTRNPE) has biased composition (basic and acidic residues). The segment covering 335-351 (WRPPPKGAPERPPPPKL) has biased composition (pro residues). Low complexity predominate over residues 352-361 (PASKSSNKNL). Phosphoserine is present on Ser-368. 5 consecutive SH3 domains span residues 414-476 (LSVP…PLDE), 494-553 (SGAP…VIVD), 570-629 (AKGP…LVGD), 660-719 (PPGE…PCPA), and 729-788 (PKGR…FLQV). Positions 474–484 (LDERPRGRPND) are enriched in basic and acidic residues. The tract at residues 635-663 (ANILSTKVPPKTKNEDPGSNSQDSSPPGE) is disordered.

In terms of assembly, interacts with ADAM12. Isoform 2 (but not isoform 1) interacts with ADAM9, ADAM10, ADAM15 and ADAM17. Interacts with SH3GL1 SH3 domain. Interacts via SH3 3 and SH3 4 or SH3 4 and SH3 5 domains with SOS2. Probably forms a trimeric complex with SH3GL1 and SOS2. Interacts with SH3YL1. As to expression, expressed in hair follicles.

It localises to the cytoplasm. Its function is as follows. May play a role in regulating A disintegrin and metalloproteases (ADAMs) in the signaling of EGFR-ligand shedding. May be involved in suppression of Ras-induced cellular transformation and Ras-mediated activation of ELK1. Plays a role in the regulation of cell morphology and cytoskeletal organization. The chain is SH3 domain-containing protein 19 (Sh3d19) from Mus musculus (Mouse).